We begin with the raw amino-acid sequence, 484 residues long: ATP synthase subunit beta (484 aa).

Residue 168-175 participates in ATP binding; sequence GGAGVGKT.

It belongs to the ATPase alpha/beta chains family. F-type ATPases have 2 components, CF(1) - the catalytic core - and CF(0) - the membrane proton channel. CF(1) has five subunits: alpha(3), beta(3), gamma(1), delta(1), epsilon(1). CF(0) has three main subunits: a(1), b(2) and c(9-12). The alpha and beta chains form an alternating ring which encloses part of the gamma chain. CF(1) is attached to CF(0) by a central stalk formed by the gamma and epsilon chains, while a peripheral stalk is formed by the delta and b chains.

Its subcellular location is the cell membrane. It catalyses the reaction ATP + H2O + 4 H(+)(in) = ADP + phosphate + 5 H(+)(out). Its function is as follows. Produces ATP from ADP in the presence of a proton gradient across the membrane. The catalytic sites are hosted primarily by the beta subunits. The protein is ATP synthase subunit beta of Arthrobacter sp. (strain FB24).